Consider the following 168-residue polypeptide: MSAVAEPQPSVALHPDIAALAPLLGTWRGAGHGQYPTIESFDYHEEISFGHLGRPFLTYRQRTRAADGSRPMHAETGYLRRPRPDHVELILAHPTGITEICEGSLTIADGELRMDFDSTHIGRSSTAKLVTALGRSFRVAGDTIEYSLRMAAVGEPLTHHLAATLRRD.

Positions 25–31 (GTWRGAG) match the GXWXGXG motif. Residue H160 coordinates heme b.

This sequence belongs to the nitrobindin family. As to quaternary structure, homodimer. The cofactor is heme b.

The enzyme catalyses peroxynitrite = nitrate. Its pathway is nitrogen metabolism. Functionally, heme-binding protein able to scavenge peroxynitrite and to protect free L-tyrosine against peroxynitrite-mediated nitration, by acting as a peroxynitrite isomerase that converts peroxynitrite to nitrate. Therefore, this protein likely plays a role in peroxynitrite sensing and in the detoxification of reactive nitrogen and oxygen species (RNS and ROS, respectively). Is able to bind nitric oxide (NO) in vitro, but may act as a sensor of peroxynitrite levels in vivo. The sequence is that of Peroxynitrite isomerase from Nocardia farcinica (strain IFM 10152).